Consider the following 489-residue polypeptide: UDP-glycosyltransferase 85A1 (489 aa).

UDP-alpha-D-glucose is bound by residues Ser-307, 364–366, 381–389, and 403–406; these read CPQ, HCGWNSILE, and FADQ.

This sequence belongs to the UDP-glycosyltransferase family. In terms of tissue distribution, expressed in root tips, lateral root initials, root apex, shoots, leaf periphery, leaf primordia and flowers.

Functionally, involved in the O-glucosylation of trans-zeatin and dihydrozeatin. Also active in vitro on cis-zeatin. Not active on N-glucosylated substrates. The polypeptide is UDP-glycosyltransferase 85A1 (UGT85A1) (Arabidopsis thaliana (Mouse-ear cress)).